The following is a 246-amino-acid chain: Bis(5'-nucleosyl)-tetraphosphatase PrpE [asymmetrical] (246 aa).

Belongs to the PrpE family. Ni(2+) serves as cofactor.

The catalysed reaction is P(1),P(4)-bis(5'-guanosyl) tetraphosphate + H2O = GMP + GTP + 2 H(+). In terms of biological role, asymmetrically hydrolyzes Ap4p to yield AMP and ATP. In Bacillus anthracis (strain A0248), this protein is Bis(5'-nucleosyl)-tetraphosphatase PrpE [asymmetrical].